The following is a 470-amino-acid chain: Aromatic amino acid aminotransferase C569.07 (470 aa).

This sequence belongs to the class-I pyridoxal-phosphate-dependent aminotransferase family. Pyridoxal 5'-phosphate serves as cofactor.

It localises to the cytoplasm. It catalyses the reaction an aromatic L-alpha-amino acid + 2-oxoglutarate = an aromatic oxo-acid + L-glutamate. Its function is as follows. Has aromatic amino acid transaminase activity. In Schizosaccharomyces pombe (strain 972 / ATCC 24843) (Fission yeast), this protein is Aromatic amino acid aminotransferase C569.07.